A 273-amino-acid chain; its full sequence is Probable glycerophosphodiester phosphodiesterase GpdQ (273 aa).

Asp8, His10, Asp50, Asn80, His154, His194, and His196 together coordinate Fe cation.

It belongs to the cyclic nucleotide phosphodiesterase class-III family. The cofactor is Fe(2+).

The catalysed reaction is a sn-glycero-3-phosphodiester + H2O = an alcohol + sn-glycerol 3-phosphate + H(+). It carries out the reaction sn-glycero-3-phosphoethanolamine + H2O = ethanolamine + sn-glycerol 3-phosphate + H(+). Functionally, catalyzes the hydrolysis of the 3'-5' phosphodiester bond of glycerophosphodiesters such as glycerophosphorylethanolamine (GPE), a typical phospholipid metabolite. The sequence is that of Probable glycerophosphodiester phosphodiesterase GpdQ from Arcobacter nitrofigilis (strain ATCC 33309 / DSM 7299 / CCUG 15893 / LMG 7604 / NCTC 12251 / CI) (Campylobacter nitrofigilis).